The chain runs to 835 residues: Protein translocase subunit SecA (835 aa).

ATP contacts are provided by residues Gln-85, 103-107 (GEGKT), and Asp-492. 4 residues coordinate Zn(2+): Cys-819, Cys-821, Cys-830, and Cys-831.

This sequence belongs to the SecA family. In terms of assembly, monomer and homodimer. Part of the essential Sec protein translocation apparatus which comprises SecA, SecYEG and auxiliary proteins SecDF. Other proteins may also be involved. The cofactor is Zn(2+).

The protein resides in the cell membrane. The protein localises to the cytoplasm. The catalysed reaction is ATP + H2O + cellular proteinSide 1 = ADP + phosphate + cellular proteinSide 2.. Its function is as follows. Part of the Sec protein translocase complex. Interacts with the SecYEG preprotein conducting channel. Has a central role in coupling the hydrolysis of ATP to the transfer of proteins into and across the cell membrane, serving as an ATP-driven molecular motor driving the stepwise translocation of polypeptide chains across the membrane. This chain is Protein translocase subunit SecA, found in Clostridium botulinum (strain Okra / Type B1).